The sequence spans 400 residues: Elongation factor Tu (400 aa).

Positions lysine 10 to arginine 210 constitute a tr-type G domain. Residues glycine 19 to threonine 26 form a G1 region. Glycine 19–threonine 26 lines the GTP pocket. Threonine 26 serves as a coordination point for Mg(2+). Residues glycine 60 to alanine 64 form a G2 region. The G3 stretch occupies residues aspartate 81–glycine 84. GTP-binding positions include aspartate 81–histidine 85 and asparagine 136–aspartate 139. Positions asparagine 136 to aspartate 139 are G4. Residues serine 174–isoleucine 176 are G5.

The protein belongs to the TRAFAC class translation factor GTPase superfamily. Classic translation factor GTPase family. EF-Tu/EF-1A subfamily. In terms of assembly, monomer.

The protein localises to the cytoplasm. It carries out the reaction GTP + H2O = GDP + phosphate + H(+). GTP hydrolase that promotes the GTP-dependent binding of aminoacyl-tRNA to the A-site of ribosomes during protein biosynthesis. This is Elongation factor Tu from Dehalococcoides mccartyi (strain ATCC BAA-2266 / KCTC 15142 / 195) (Dehalococcoides ethenogenes (strain 195)).